A 278-amino-acid chain; its full sequence is HTH-type transcriptional regulator TsaQ1/TsaQ2 (278 aa).

The region spanning 19–80 (VHSLAKGLEI…PRSRKLAMGA (62 aa)) is the HTH iclR-type domain. The H-T-H motif DNA-binding region spans 40-59 (NQQLVELTGLPKATVSRLTS). The region spanning 95-266 (LQRIARPHME…VQDIQAEMRA (172 aa)) is the IclR-ED domain.

Its function is as follows. Both copies function as additional regulators for the tsa locus, specifically for tsaT. The polypeptide is HTH-type transcriptional regulator TsaQ1/TsaQ2 (tsaQ1) (Comamonas testosteroni (Pseudomonas testosteroni)).